Consider the following 177-residue polypeptide: Alkyl hydroperoxide reductase AhpD (177 aa).

The Proton donor role is filled by Cys131. Cysteines 131 and 134 form a disulfide. Catalysis depends on Cys134, which acts as the Cysteine sulfenic acid (-SOH) intermediate.

The protein belongs to the AhpD family.

The catalysed reaction is N(6)-[(R)-dihydrolipoyl]-L-lysyl-[lipoyl-carrier protein] + a hydroperoxide = N(6)-[(R)-lipoyl]-L-lysyl-[lipoyl-carrier protein] + an alcohol + H2O. Antioxidant protein with alkyl hydroperoxidase activity. Required for the reduction of the AhpC active site cysteine residues and for the regeneration of the AhpC enzyme activity. The protein is Alkyl hydroperoxide reductase AhpD of Solibacter usitatus (strain Ellin6076).